A 117-amino-acid polypeptide reads, in one-letter code: Large ribosomal subunit protein uL18 (117 aa).

It belongs to the universal ribosomal protein uL18 family. As to quaternary structure, part of the 50S ribosomal subunit; part of the 5S rRNA/L5/L18/L25 subcomplex. Contacts the 5S and 23S rRNAs.

In terms of biological role, this is one of the proteins that bind and probably mediate the attachment of the 5S RNA into the large ribosomal subunit, where it forms part of the central protuberance. In Glaesserella parasuis serovar 5 (strain SH0165) (Haemophilus parasuis), this protein is Large ribosomal subunit protein uL18.